We begin with the raw amino-acid sequence, 208 residues long: Small ribosomal subunit protein uS4A (208 aa).

The S4 RNA-binding domain occupies 98 to 161 (LRLDNVVFRM…RKVLRISEAL (64 aa)).

Belongs to the universal ribosomal protein uS4 family. In terms of assembly, part of the 30S ribosomal subunit. Contacts protein S5. The interaction surface between S4 and S5 is involved in control of translational fidelity.

In terms of biological role, one of the primary rRNA binding proteins, it binds directly to 16S rRNA where it nucleates assembly of the body of the 30S subunit. Functionally, with S5 and S12 plays an important role in translational accuracy. The protein is Small ribosomal subunit protein uS4A of Myxococcus xanthus (strain DK1622).